Here is a 962-residue protein sequence, read N- to C-terminus: Translation initiation factor IF-2 (962 aa).

Residues 99-366 form a disordered region; it reads VKAAQTQAAP…KKGKKLKLEP (268 aa). Positions 117–141 are enriched in basic and acidic residues; sequence DAAKARAEAAARAEARAKAEAEAAK. Residues 145–155 show a composition bias toward low complexity; it reads AKAGNKAKPAA. Residues 173-216 show a composition bias toward basic and acidic residues; the sequence is KPAEESKAEKAQADKMPSEKPAEPKEKAAKPKHERNGKGKDAKK. Positions 219–234 are enriched in low complexity; it reads KPAAPAVPQPVVSAEE. Over residues 235–269 the composition is skewed to basic and acidic residues; sequence QAQRDEEARRAAALRAHQEALLKEKQERQARREAM. Low complexity predominate over residues 270 to 283; sequence KQQAEQQAKAAQEA. Composition is skewed to basic and acidic residues over residues 314–327 and 338–354; these read AKKE…DEGQ and GGRD…ERVR. Residues 462–631 form the tr-type G domain; the sequence is PRPPVVTVMG…LLEAEVLELT (170 aa). The interval 471-478 is G1; it reads GHVDHGKT. A GTP-binding site is contributed by 471-478; the sequence is GHVDHGKT. Residues 496–500 are G2; the sequence is GITQH. The segment at 517–520 is G3; that stretch reads DTPG. GTP contacts are provided by residues 517-521 and 571-574; these read DTPGH and NKID. Positions 571 to 574 are G4; the sequence is NKID. Residues 607-609 form a G5 region; the sequence is SAK.

Belongs to the TRAFAC class translation factor GTPase superfamily. Classic translation factor GTPase family. IF-2 subfamily.

It localises to the cytoplasm. Its function is as follows. One of the essential components for the initiation of protein synthesis. Protects formylmethionyl-tRNA from spontaneous hydrolysis and promotes its binding to the 30S ribosomal subunits. Also involved in the hydrolysis of GTP during the formation of the 70S ribosomal complex. The sequence is that of Translation initiation factor IF-2 from Neisseria meningitidis serogroup B (strain ATCC BAA-335 / MC58).